The chain runs to 667 residues: Chaperone protein DnaK (667 aa).

Phosphothreonine; by autocatalysis is present on threonine 196. 2 disordered regions span residues 495–525 and 595–667; these read EANS…RKER and AGEE…GDDE. Over residues 506–525 the composition is skewed to basic and acidic residues; the sequence is EKMKEEAEQHAEEDERRKER. Positions 595–612 are enriched in low complexity; it reads AGEEIREAQQQQAQQGAA. The span at 630–641 shows a compositional bias: gly residues; it reads GPAGGPTGGPAS. Positions 647–667 are enriched in acidic residues; it reads DSDEEDVQDADYEVVDEGDDE.

It belongs to the heat shock protein 70 family.

Functionally, acts as a chaperone. This chain is Chaperone protein DnaK, found in Salinibacter ruber (strain DSM 13855 / M31).